The sequence spans 464 residues: Kynureninase 2 (464 aa).

Pyridoxal 5'-phosphate contacts are provided by residues Leu-135, Thr-136, 163-166 (FPSD), Asp-248, His-251, and Tyr-273. Residue Lys-274 is modified to N6-(pyridoxal phosphate)lysine. Pyridoxal 5'-phosphate is bound by residues Trp-313 and Asn-341.

Belongs to the kynureninase family. Homodimer. It depends on pyridoxal 5'-phosphate as a cofactor.

Its subcellular location is the cytoplasm. It catalyses the reaction L-kynurenine + H2O = anthranilate + L-alanine + H(+). The enzyme catalyses 3-hydroxy-L-kynurenine + H2O = 3-hydroxyanthranilate + L-alanine + H(+). It participates in amino-acid degradation; L-kynurenine degradation; L-alanine and anthranilate from L-kynurenine: step 1/1. Its pathway is cofactor biosynthesis; NAD(+) biosynthesis; quinolinate from L-kynurenine: step 2/3. Catalyzes the cleavage of L-kynurenine (L-Kyn) and L-3-hydroxykynurenine (L-3OHKyn) into anthranilic acid (AA) and 3-hydroxyanthranilic acid (3-OHAA), respectively. The polypeptide is Kynureninase 2 (bna5-2) (Aspergillus clavatus (strain ATCC 1007 / CBS 513.65 / DSM 816 / NCTC 3887 / NRRL 1 / QM 1276 / 107)).